Consider the following 668-residue polypeptide: S-adenosyl-L-methionine-dependent tRNA 4-demethylwyosine synthase TYW1B (668 aa).

Residues 37-191 (CVQIVIEMQG…NFRAWKTKFI (155 aa)) form the Flavodoxin-like domain. Residues 43–47 (EMQGF) and 130–162 (VFGL…HRVM) contribute to the FMN site. The tract at residues 202-269 (RKKSCGGHCK…QSLNSIVDVE (68 aa)) is disordered. Composition is skewed to basic and acidic residues over residues 213 to 223 (GKCESHQHGSE) and 233 to 243 (DELHHRDTKEE). Over residues 244–255 (EPFESSSEEEFG) the composition is skewed to acidic residues. A Radical SAM core domain is found at 336-580 (LWNESHRCME…VDLIPEYEIA (245 aa)). [4Fe-4S] cluster is bound by residues C352, C356, and C359.

This sequence belongs to the TYW1 family. The cofactor is [4Fe-4S] cluster.

The enzyme catalyses N(1)-methylguanosine(37) in tRNA(Phe) + pyruvate + S-adenosyl-L-methionine = 4-demethylwyosine(37) in tRNA(Phe) + 5'-deoxyadenosine + L-methionine + CO2 + H2O. It participates in tRNA modification; wybutosine-tRNA(Phe) biosynthesis. Its function is as follows. Probable component of the wybutosine biosynthesis pathway. Wybutosine is a hyper modified guanosine with a tricyclic base found at the 3'-position adjacent to the anticodon of eukaryotic phenylalanine tRNA. Catalyzes the condensation of N-methylguanine with 2 carbon atoms from pyruvate to form the tricyclic 4-demethylwyosine, an intermediate in wybutosine biosynthesis. This chain is S-adenosyl-L-methionine-dependent tRNA 4-demethylwyosine synthase TYW1B (TYW1B), found in Homo sapiens (Human).